The following is a 221-amino-acid chain: MKTITTDWELIPYSEAWSRQTEWFDALVHAKQNGESYENRIIFCEHPHVYTLGRSGKENNMLLGEEQLKTIGATLYHIDRGGDITYHGPGQLVCYPILNLEEFGLGLKEYVHLLEEAVIRVCASYGVVAGRLEKATGVWLEGDTSRARKICAIGVRSSHYVTMHGLALNVNTDLRYFSYIHPCGFIDKGVTSLQQELGRSIDMAEVKERLGRELLAALLSK.

The BPL/LPL catalytic domain occupies 35-221 (ESYENRIIFC…RELLAALLSK (187 aa)). Residues 80-87 (RGGDITYH), 152-154 (AIG), and 165-167 (GLA) each bind substrate. Cys183 acts as the Acyl-thioester intermediate in catalysis.

Belongs to the LipB family.

The protein localises to the cytoplasm. The catalysed reaction is octanoyl-[ACP] + L-lysyl-[protein] = N(6)-octanoyl-L-lysyl-[protein] + holo-[ACP] + H(+). It participates in protein modification; protein lipoylation via endogenous pathway; protein N(6)-(lipoyl)lysine from octanoyl-[acyl-carrier-protein]: step 1/2. In terms of biological role, catalyzes the transfer of endogenously produced octanoic acid from octanoyl-acyl-carrier-protein onto the lipoyl domains of lipoate-dependent enzymes. Lipoyl-ACP can also act as a substrate although octanoyl-ACP is likely to be the physiological substrate. This Bacteroides fragilis (strain YCH46) protein is Octanoyltransferase.